We begin with the raw amino-acid sequence, 621 residues long: 1-deoxy-D-xylulose-5-phosphate synthase (621 aa).

Thiamine diphosphate contacts are provided by residues His-80 and 121 to 123 (GHS). A Mg(2+)-binding site is contributed by Asp-152. Thiamine diphosphate-binding positions include 153–154 (GA), Asn-181, Tyr-288, and Glu-370. Asn-181 serves as a coordination point for Mg(2+).

This sequence belongs to the transketolase family. DXPS subfamily. Homodimer. Mg(2+) is required as a cofactor. It depends on thiamine diphosphate as a cofactor.

The catalysed reaction is D-glyceraldehyde 3-phosphate + pyruvate + H(+) = 1-deoxy-D-xylulose 5-phosphate + CO2. It functions in the pathway metabolic intermediate biosynthesis; 1-deoxy-D-xylulose 5-phosphate biosynthesis; 1-deoxy-D-xylulose 5-phosphate from D-glyceraldehyde 3-phosphate and pyruvate: step 1/1. In terms of biological role, catalyzes the acyloin condensation reaction between C atoms 2 and 3 of pyruvate and glyceraldehyde 3-phosphate to yield 1-deoxy-D-xylulose-5-phosphate (DXP). This chain is 1-deoxy-D-xylulose-5-phosphate synthase, found in Vibrio parahaemolyticus serotype O3:K6 (strain RIMD 2210633).